A 488-amino-acid chain; its full sequence is L-arabinose isomerase 2 (488 aa).

Positions 306, 331, 348, and 447 each coordinate Mn(2+).

This sequence belongs to the arabinose isomerase family. It depends on Mn(2+) as a cofactor.

It catalyses the reaction beta-L-arabinopyranose = L-ribulose. Its pathway is carbohydrate degradation; L-arabinose degradation via L-ribulose; D-xylulose 5-phosphate from L-arabinose (bacterial route): step 1/3. Functionally, catalyzes the conversion of L-arabinose to L-ribulose. The chain is L-arabinose isomerase 2 from Clostridium acetobutylicum (strain ATCC 824 / DSM 792 / JCM 1419 / IAM 19013 / LMG 5710 / NBRC 13948 / NRRL B-527 / VKM B-1787 / 2291 / W).